Consider the following 219-residue polypeptide: 2-hydroxy-3-keto-5-methylthiopentenyl-1-phosphate phosphatase (219 aa).

Belongs to the HAD-like hydrolase superfamily. MtnX family.

It carries out the reaction 2-hydroxy-5-methylsulfanyl-3-oxopent-1-enyl phosphate + H2O = 1,2-dihydroxy-5-(methylsulfanyl)pent-1-en-3-one + phosphate. The protein operates within amino-acid biosynthesis; L-methionine biosynthesis via salvage pathway; L-methionine from S-methyl-5-thio-alpha-D-ribose 1-phosphate: step 4/6. Dephosphorylates 2-hydroxy-3-keto-5-methylthiopentenyl-1-phosphate (HK-MTPenyl-1-P) yielding 1,2-dihydroxy-3-keto-5-methylthiopentene (DHK-MTPene). The protein is 2-hydroxy-3-keto-5-methylthiopentenyl-1-phosphate phosphatase of Bacillus cereus (strain G9842).